The sequence spans 344 residues: Ubiquitin-associated domain-containing protein 2 (344 aa).

Positions 1 to 35 (MFTSTGSSGLYKAPLSKSLLLVPSALSLLLALLLP) are cleaved as a signal peptide. The Extracellular segment spans residues 36–91 (HCQKLFVYDLHAVKNDFQIWRLICGRIICLDLKDTFCSSLLIYNFRIFERRYGSRK). The chain crosses the membrane as a helical span at residues 92-112 (FASFLLGSWVLSALFDFLLIE). At 113–125 (AMQYFFGITAASN) the chain is on the cytoplasmic side. Residues 126–146 (LPSGFLAPVFALFVPFYCSIP) traverse the membrane as a helical segment. At 147–163 (RVQVAQILGPLSITNKT) the chain is on the extracellular side. N161 carries an N-linked (GlcNAc...) asparagine glycan. Residues 164 to 184 (LIYILGLQLFTSGSYIWIVAI) form a helical membrane-spanning segment. The Cytoplasmic segment spans residues 185–344 (SGLMSGLCYD…NVATNFLLQH (160 aa)). Residues 304-344 (EVSEEQVARLMEMGFSRGDALEALRASNNDLNVATNFLLQH) enclose the UBA domain.

In terms of assembly, interacts with FAF2. Interacts with LMBR1L. Interacts with AMFR and VCP.

The protein localises to the endoplasmic reticulum membrane. Functionally, restricts trafficking of FAF2 from the endoplasmic reticulum to lipid droplets. In association with LMBR1L and E3 ubiquitin-protein ligase AMFR, negatively regulates the canonical Wnt signaling pathway in the lymphocytes by promoting the ubiquitin-mediated degradation of CTNNB1 and Wnt receptors FZD6 and LRP6. The polypeptide is Ubiquitin-associated domain-containing protein 2 (UBAC2) (Homo sapiens (Human)).